We begin with the raw amino-acid sequence, 361 residues long: Probable G-protein coupled receptor 25 (361 aa).

Residues 1–39 are Extracellular-facing; that stretch reads MAPTEPWSPSPGSAPWDYSGLDGLEELELCPAGDLPYGY. The chain crosses the membrane as a helical span at residues 40 to 60; sequence VYIPALYLAAFAVGLLGNAFV. The Cytoplasmic portion of the chain corresponds to 61 to 75; sequence VWLLAGRRGPRRLVD. Residues 76–96 form a helical membrane-spanning segment; sequence TFVLHLAAADLGFVLTLPLWA. The Extracellular segment spans residues 97–126; it reads AAAALGGRWPFGDGLCKLSSFALAGTRCAG. A helical membrane pass occupies residues 127–147; it reads ALLLAGMSVDRYLAVVKLLEA. Topologically, residues 148 to 155 are cytoplasmic; that stretch reads RPLRTPRC. Residues 156–176 traverse the membrane as a helical segment; sequence ALASCCGVWAVALLAGLPSLV. Residues 177-200 lie on the Extracellular side of the membrane; it reads YRGLQPLPGGQDSQCGEEPSHAFQ. The chain crosses the membrane as a helical span at residues 201 to 220; the sequence is GLSLLLLLLTFVLPLVVTLF. The Cytoplasmic portion of the chain corresponds to 221–242; that stretch reads CYCRISRRLRRPPHVGRARRNS. The helical transmembrane segment at 243–263 threads the bilayer; it reads LRIIFAIESTFVGSWLPFSAL. The Extracellular portion of the chain corresponds to 264 to 289; that stretch reads RAVFHLARLGALPLPCPLLLALRWGL. The helical transmembrane segment at 290-310 threads the bilayer; the sequence is TIATCLAFVNSCANPLIYLLL. The Cytoplasmic segment spans residues 311-361; the sequence is DRSFRARALDGACGRTGRLARRISSASSLSRDDSSVFRCRAQAANTASASW.

The protein belongs to the G-protein coupled receptor 1 family.

It is found in the cell membrane. Orphan receptor. The polypeptide is Probable G-protein coupled receptor 25 (GPR25) (Homo sapiens (Human)).